The primary structure comprises 171 residues: 3-hydroxydecanoyl-[acyl-carrier-protein] dehydratase (171 aa).

His70 is a catalytic residue.

The protein belongs to the thioester dehydratase family. FabA subfamily. In terms of assembly, homodimer.

It localises to the cytoplasm. It catalyses the reaction a (3R)-hydroxyacyl-[ACP] = a (2E)-enoyl-[ACP] + H2O. The catalysed reaction is (3R)-hydroxydecanoyl-[ACP] = (2E)-decenoyl-[ACP] + H2O. The enzyme catalyses (2E)-decenoyl-[ACP] = (3Z)-decenoyl-[ACP]. It functions in the pathway lipid metabolism; fatty acid biosynthesis. Functionally, necessary for the introduction of cis unsaturation into fatty acids. Catalyzes the dehydration of (3R)-3-hydroxydecanoyl-ACP to E-(2)-decenoyl-ACP and then its isomerization to Z-(3)-decenoyl-ACP. Can catalyze the dehydratase reaction for beta-hydroxyacyl-ACPs with saturated chain lengths up to 16:0, being most active on intermediate chain length. This Xanthomonas axonopodis pv. citri (strain 306) protein is 3-hydroxydecanoyl-[acyl-carrier-protein] dehydratase.